We begin with the raw amino-acid sequence, 446 residues long: Methylenetetrahydrofolate--tRNA-(uracil-5-)-methyltransferase TrmFO (446 aa).

11–16 (GGGLAG) contacts FAD.

This sequence belongs to the MnmG family. TrmFO subfamily. It depends on FAD as a cofactor.

The protein localises to the cytoplasm. The enzyme catalyses uridine(54) in tRNA + (6R)-5,10-methylene-5,6,7,8-tetrahydrofolate + NADH + H(+) = 5-methyluridine(54) in tRNA + (6S)-5,6,7,8-tetrahydrofolate + NAD(+). It carries out the reaction uridine(54) in tRNA + (6R)-5,10-methylene-5,6,7,8-tetrahydrofolate + NADPH + H(+) = 5-methyluridine(54) in tRNA + (6S)-5,6,7,8-tetrahydrofolate + NADP(+). Catalyzes the folate-dependent formation of 5-methyl-uridine at position 54 (M-5-U54) in all tRNAs. The chain is Methylenetetrahydrofolate--tRNA-(uracil-5-)-methyltransferase TrmFO from Oleidesulfovibrio alaskensis (strain ATCC BAA-1058 / DSM 17464 / G20) (Desulfovibrio alaskensis).